A 539-amino-acid polypeptide reads, in one-letter code: Glutamyl-tRNA(Gln) amidotransferase subunit A, mitochondrial (539 aa).

Catalysis depends on charge relay system residues K94 and S181. The Acyl-ester intermediate role is filled by S205.

This sequence belongs to the amidase family. GatA subfamily. In terms of assembly, subunit of the heterotrimeric GatCAB amidotransferase (AdT) complex, composed of A, B and C subunits.

The protein resides in the mitochondrion. It catalyses the reaction L-glutamyl-tRNA(Gln) + L-glutamine + ATP + H2O = L-glutaminyl-tRNA(Gln) + L-glutamate + ADP + phosphate + H(+). Its function is as follows. Allows the formation of correctly charged Gln-tRNA(Gln) through the transamidation of misacylated Glu-tRNA(Gln) in the mitochondria. The reaction takes place in the presence of glutamine and ATP through an activated gamma-phospho-Glu-tRNA(Gln). The protein is Glutamyl-tRNA(Gln) amidotransferase subunit A, mitochondrial of Mycosarcoma maydis (Corn smut fungus).